The chain runs to 231 residues: Large ribosomal subunit protein uL1 (231 aa).

It belongs to the universal ribosomal protein uL1 family. In terms of assembly, part of the 50S ribosomal subunit.

Functionally, binds directly to 23S rRNA. The L1 stalk is quite mobile in the ribosome, and is involved in E site tRNA release. Its function is as follows. Protein L1 is also a translational repressor protein, it controls the translation of the L11 operon by binding to its mRNA. In Alkalilimnicola ehrlichii (strain ATCC BAA-1101 / DSM 17681 / MLHE-1), this protein is Large ribosomal subunit protein uL1.